Here is a 225-residue protein sequence, read N- to C-terminus: N-(5'-phosphoribosyl)anthranilate isomerase (225 aa).

Belongs to the TrpF family.

It carries out the reaction N-(5-phospho-beta-D-ribosyl)anthranilate = 1-(2-carboxyphenylamino)-1-deoxy-D-ribulose 5-phosphate. It functions in the pathway amino-acid biosynthesis; L-tryptophan biosynthesis; L-tryptophan from chorismate: step 3/5. This is N-(5'-phosphoribosyl)anthranilate isomerase from Nitrobacter hamburgensis (strain DSM 10229 / NCIMB 13809 / X14).